Here is a 133-residue protein sequence, read N- to C-terminus: Histone H2A.Z (133 aa).

Over residues 1 to 11 the composition is skewed to basic residues; the sequence is MSGKGKVHGGK. The segment at 1–30 is disordered; it reads MSGKGKVHGGKGKSSDSAKASTSHSARAGL. Serine 2 is modified (N-acetylserine). Residues lysine 4, lysine 11, and lysine 13 each carry the N6-acetyllysine modification. The span at 15–26 shows a compositional bias: low complexity; the sequence is SDSAKASTSHSA.

Belongs to the histone H2A family. In terms of assembly, the nucleosome is a histone octamer containing two molecules each of H2A, H2B, H3 and H4 assembled in one H3-H4 heterotetramer and two H2A-H2B heterodimers. The octamer wraps approximately 147 bp of DNA. H2A or its variant H2A.Z forms a heterodimer with H2B. H2A.Z associates with the VPS72/SWC2 subunit of the SWR1 chromatin remodeling complex. Also interacts with RBP1/DNA-directed RNA polymerase II largest subunit. Post-translationally, acetylated once deposited into chromatin.

Its subcellular location is the nucleus. It is found in the chromosome. Its function is as follows. Variant histone H2A which can replace H2A in some nucleosomes. Nucleosomes wrap and compact DNA into chromatin, limiting DNA accessibility to the cellular machineries which require DNA as a template. Histones thereby play a central role in transcription regulation, DNA repair, DNA replication and chromosomal stability. DNA accessibility is regulated via a complex set of post-translational modifications of histones, also called histone code, and nucleosome remodeling. This variant is enriched at promoters, it may keep them in a repressed state until the appropriate activation signal is received. Near telomeres, it may counteract gene silencing caused by the spread of heterochromatin proteins. Required for the RNA polymerase II and SPT15/TBP recruitment to the target genes. Involved in chromosome stability. This Meyerozyma guilliermondii (strain ATCC 6260 / CBS 566 / DSM 6381 / JCM 1539 / NBRC 10279 / NRRL Y-324) (Yeast) protein is Histone H2A.Z (HTZ1).